A 424-amino-acid chain; its full sequence is PtdIns3K complex I subunit atg38 (424 aa).

Positions 50–78 (LIKRCANNQIEELMVRIRELRESLPNKQT) form a coiled coil. Residues 73–212 (LPNKQTPISM…DPAYQNTNEQ (140 aa)) form a required for interaction with atg8 region. Residues 178–181 (FLIV) carry the AIM motif. Over residues 268 to 284 (LSEEEMGRSHKREESFK) the composition is skewed to basic and acidic residues. A disordered region spans residues 268–299 (LSEEEMGRSHKREESFKRAFGHASSSESSIGE). The stretch at 390 to 420 (TVDSQLKIKQLETQIATLQKQLEQFQTSTLD) forms a coiled coil.

It belongs to the ATG38 family. As to quaternary structure, component of the autophagy-specific vps34 PI3-kinase complex I composed of vps15, atg6, pik3/vps34, atg14 and atg38. Interacts (via AIM motif) with atg8; the interaction is direct and leads to recruitment of the autophagy-specific vps34 PI3-kinase complex I to the phagophore assembly site.

It localises to the preautophagosomal structure membrane. The protein localises to the cytoplasm. It is found in the cytosol. In terms of biological role, functions as a part of the autophagy-specific VPS34 PI3-kinase complex I that plays a role in autophagosome assembly. This complex is essential to recruit the atg8-phosphatidylinositol conjugate and the atg12-atg5 conjugate to the pre-autophagosomal structure. By binding to atg8 at the phagophore assembly site, atg38 helps establish a positive feedback loop for recruitment of phagophore assembly proteins, including atg8. The chain is PtdIns3K complex I subunit atg38 from Schizosaccharomyces pombe (strain 972 / ATCC 24843) (Fission yeast).